The sequence spans 316 residues: Ribosomal RNA small subunit methyltransferase H (316 aa).

S-adenosyl-L-methionine is bound by residues 35–37, Asp-55, Phe-79, Asp-101, and Gln-108; that span reads GGH.

The protein belongs to the methyltransferase superfamily. RsmH family.

The protein localises to the cytoplasm. The catalysed reaction is cytidine(1402) in 16S rRNA + S-adenosyl-L-methionine = N(4)-methylcytidine(1402) in 16S rRNA + S-adenosyl-L-homocysteine + H(+). Specifically methylates the N4 position of cytidine in position 1402 (C1402) of 16S rRNA. The sequence is that of Ribosomal RNA small subunit methyltransferase H from Vibrio campbellii (strain ATCC BAA-1116).